The following is a 994-amino-acid chain: Regulator of telomere elongation helicase 1 homolog (994 aa).

The 310-residue stretch at 15–324 folds into the Helicase ATP-binding domain; the sequence is SKTSIKFPFE…KLIENLRTED (310 aa). An ATP-binding site is contributed by 50-57; sequence SPTGTGKT. Residues Cys-142, Cys-160, Cys-169, and Cys-208 each contribute to the [4Fe-4S] cluster site. Residues 251-254 carry the DEAH box motif; the sequence is DEAH. Basic and acidic residues predominate over residues 818 to 831; sequence KIEKKEKIEPRPIK. The tract at residues 818-896 is disordered; that stretch reads KIEKKEKIEP…HVVSGSEPPK (79 aa). Residues 833–844 show a composition bias toward polar residues; the sequence is DSSSSSVFSLPT. The span at 847 to 856 shows a compositional bias: basic and acidic residues; the sequence is DELKVKKWEQ. Composition is skewed to polar residues over residues 859-869 and 880-889; these read DSQTNVSSSSD and PGNSSGQHVV.

This sequence belongs to the helicase family. RAD3/XPD subfamily.

The protein localises to the nucleus. It carries out the reaction ATP + H2O = ADP + phosphate + H(+). A probable ATP-dependent DNA helicase implicated in DNA repair and the maintenance of genomic stability. Acts as an anti-recombinase to counteract toxic recombination and limit crossover during meiosis. Regulates meiotic recombination and crossover homeostasis by physically dissociating strand invasion events and thereby promotes noncrossover repair by meiotic synthesis dependent strand annealing (SDSA) as well as disassembly of D loop recombination intermediates. In Caenorhabditis briggsae, this protein is Regulator of telomere elongation helicase 1 homolog.